The chain runs to 544 residues: Protein anon-37Cs (544 aa).

The protein localises to the cytoplasm. Has a non-vital function. The chain is Protein anon-37Cs (anon-37Cs) from Drosophila lebanonensis (Fruit fly).